We begin with the raw amino-acid sequence, 260 residues long: Cytochrome c oxidase subunit 3 (260 aa).

Helical transmembrane passes span 14–34, 41–61, 81–101, 126–146, 158–178, 196–216, and 238–258; these read PWPL…ILWF, LLLA…RDVI, GMIL…WAFF, FLVP…VTWA, AIQG…LQAW, FFVA…FLFI, and AWYW…ICWW.

It belongs to the cytochrome c oxidase subunit 3 family. Component of the cytochrome c oxidase (complex IV, CIV), a multisubunit enzyme composed of a catalytic core of 3 subunits and several supernumerary subunits. The complex exists as a monomer or a dimer and forms supercomplexes (SCs) in the inner mitochondrial membrane with ubiquinol-cytochrome c oxidoreductase (cytochrome b-c1 complex, complex III, CIII).

The protein localises to the mitochondrion inner membrane. It catalyses the reaction 4 Fe(II)-[cytochrome c] + O2 + 8 H(+)(in) = 4 Fe(III)-[cytochrome c] + 2 H2O + 4 H(+)(out). Component of the cytochrome c oxidase, the last enzyme in the mitochondrial electron transport chain which drives oxidative phosphorylation. The respiratory chain contains 3 multisubunit complexes succinate dehydrogenase (complex II, CII), ubiquinol-cytochrome c oxidoreductase (cytochrome b-c1 complex, complex III, CIII) and cytochrome c oxidase (complex IV, CIV), that cooperate to transfer electrons derived from NADH and succinate to molecular oxygen, creating an electrochemical gradient over the inner membrane that drives transmembrane transport and the ATP synthase. Cytochrome c oxidase is the component of the respiratory chain that catalyzes the reduction of oxygen to water. Electrons originating from reduced cytochrome c in the intermembrane space (IMS) are transferred via the dinuclear copper A center (CU(A)) of subunit 2 and heme A of subunit 1 to the active site in subunit 1, a binuclear center (BNC) formed by heme A3 and copper B (CU(B)). The BNC reduces molecular oxygen to 2 water molecules using 4 electrons from cytochrome c in the IMS and 4 protons from the mitochondrial matrix. This Patiria pectinifera (Starfish) protein is Cytochrome c oxidase subunit 3 (COIII).